Here is a 289-residue protein sequence, read N- to C-terminus: Urease accessory protein UreD (289 aa).

It belongs to the UreD family. As to quaternary structure, ureD, UreF and UreG form a complex that acts as a GTP-hydrolysis-dependent molecular chaperone, activating the urease apoprotein by helping to assemble the nickel containing metallocenter of UreC. The UreE protein probably delivers the nickel.

The protein localises to the cytoplasm. Required for maturation of urease via the functional incorporation of the urease nickel metallocenter. The polypeptide is Urease accessory protein UreD (Cupriavidus pinatubonensis (strain JMP 134 / LMG 1197) (Cupriavidus necator (strain JMP 134))).